The primary structure comprises 262 residues: Acyl-[acyl-carrier-protein]--UDP-N-acetylglucosamine O-acyltransferase (262 aa).

Belongs to the transferase hexapeptide repeat family. LpxA subfamily. In terms of assembly, homotrimer.

The protein localises to the cytoplasm. The enzyme catalyses a (3R)-hydroxyacyl-[ACP] + UDP-N-acetyl-alpha-D-glucosamine = a UDP-3-O-[(3R)-3-hydroxyacyl]-N-acetyl-alpha-D-glucosamine + holo-[ACP]. It functions in the pathway glycolipid biosynthesis; lipid IV(A) biosynthesis; lipid IV(A) from (3R)-3-hydroxytetradecanoyl-[acyl-carrier-protein] and UDP-N-acetyl-alpha-D-glucosamine: step 1/6. In terms of biological role, involved in the biosynthesis of lipid A, a phosphorylated glycolipid that anchors the lipopolysaccharide to the outer membrane of the cell. This chain is Acyl-[acyl-carrier-protein]--UDP-N-acetylglucosamine O-acyltransferase, found in Janthinobacterium sp. (strain Marseille) (Minibacterium massiliensis).